A 245-amino-acid chain; its full sequence is tRNA1(Val) (adenine(37)-N6)-methyltransferase (245 aa).

It belongs to the methyltransferase superfamily. tRNA (adenine-N(6)-)-methyltransferase family.

Its subcellular location is the cytoplasm. The catalysed reaction is adenosine(37) in tRNA1(Val) + S-adenosyl-L-methionine = N(6)-methyladenosine(37) in tRNA1(Val) + S-adenosyl-L-homocysteine + H(+). Functionally, specifically methylates the adenine in position 37 of tRNA(1)(Val) (anticodon cmo5UAC). The polypeptide is tRNA1(Val) (adenine(37)-N6)-methyltransferase (Escherichia coli (strain UTI89 / UPEC)).